We begin with the raw amino-acid sequence, 126 residues long: Large ribosomal subunit protein bL12 (126 aa).

This sequence belongs to the bacterial ribosomal protein bL12 family. As to quaternary structure, homodimer. Part of the ribosomal stalk of the 50S ribosomal subunit. Forms a multimeric L10(L12)X complex, where L10 forms an elongated spine to which 2 to 4 L12 dimers bind in a sequential fashion. Binds GTP-bound translation factors.

Its function is as follows. Forms part of the ribosomal stalk which helps the ribosome interact with GTP-bound translation factors. Is thus essential for accurate translation. This chain is Large ribosomal subunit protein bL12, found in Acidobacterium capsulatum (strain ATCC 51196 / DSM 11244 / BCRC 80197 / JCM 7670 / NBRC 15755 / NCIMB 13165 / 161).